Here is a 131-residue protein sequence, read N- to C-terminus: Ribosome-binding factor A (131 aa).

It belongs to the RbfA family. In terms of assembly, monomer. Binds 30S ribosomal subunits, but not 50S ribosomal subunits or 70S ribosomes.

It localises to the cytoplasm. Functionally, one of several proteins that assist in the late maturation steps of the functional core of the 30S ribosomal subunit. Associates with free 30S ribosomal subunits (but not with 30S subunits that are part of 70S ribosomes or polysomes). Required for efficient processing of 16S rRNA. May interact with the 5'-terminal helix region of 16S rRNA. This Thermotoga petrophila (strain ATCC BAA-488 / DSM 13995 / JCM 10881 / RKU-1) protein is Ribosome-binding factor A.